The chain runs to 210 residues: T-cell surface glycoprotein CD8 beta chain (210 aa).

A signal peptide spans 1–21 (MQPGLWLLLATQLAALRGSSV). In terms of domain architecture, Ig-like V-type spans 22–132 (LQQAPGSVMV…ELTFGKGTRL (111 aa)). Residues 22 to 170 (LQQAPGSVMV…VTQKGPSCGL (149 aa)) are Extracellular-facing. Residues Cys41 and Cys116 are joined by a disulfide bond. The N-linked (GlcNAc...) asparagine glycan is linked to Asn102. The tract at residues 139-161 (PTNSQPTKKPTPRKKMCRPPSPV) is disordered. The helical transmembrane segment at 171 to 191 (LTLGLLVAGVLVLLVSLGVAI) threads the bilayer. At 192–210 (HLYRLKRRARLRLLKQFYK) the chain is on the cytoplasmic side.

In terms of assembly, forms disulfide-linked heterodimers with CD8A at the cell surface. Interacts with CD3D; this interaction couples TCR-CD3 with CD8. Interacts with LCK. In terms of processing, phosphorylated as a consequence of T-cell activation. Palmitoylated at the cytoplasmic tail and thereby targets the heterodimer CD8A/CD8B to lipid rafts unlike CD8A homodimers.

The protein resides in the cell membrane. In terms of biological role, integral membrane glycoprotein that plays an essential role in the immune response and serves multiple functions in responses against both external and internal offenses. In T-cells, functions primarily as a coreceptor for MHC class I molecule:peptide complex. The antigens presented by class I peptides are derived from cytosolic proteins while class II derived from extracellular proteins. Interacts simultaneously with the T-cell receptor (TCR) and the MHC class I proteins presented by antigen presenting cells (APCs). In turn, recruits the Src kinase LCK to the vicinity of the TCR-CD3 complex. A palmitoylation site in the cytoplasmic tail of CD8B chain contributes to partitioning of CD8 into the plasma membrane lipid rafts where signaling proteins are enriched. Once LCK recruited, it initiates different intracellular signaling pathways by phosphorylating various substrates ultimately leading to lymphokine production, motility, adhesion and activation of cytotoxic T-lymphocytes (CTLs). Additionally, plays a critical role in thymic selection of CD8+ T-cells. The sequence is that of T-cell surface glycoprotein CD8 beta chain (CD8B) from Felis catus (Cat).